A 552-amino-acid polypeptide reads, in one-letter code: MGKHLKNESSSPNHGKYNHKLGWLAGMLHVLDFHHWRTKNRPICWKTPRTHSLMRETEEQEPFLDSKINDSKMLSVVADNKPTRPETKLKKTMTTKQVTEYVDFLEILRKEDVFVKIMKDQVQIKSNPRVLPKSGSFPISGSSRPARIQHKQKENWYAPKQNGAVLTLKVPRDTSQECKPISPSHGSADDDHGFNHAIINGFREIKKLLKNTLKDRNRTKKKKKKKVLDVAKDDYVGRYSQLLKQISRREGGDLRSKSLKLSYEEKKSDSRDNKPQFFRRISSLSSLEVLGSFLTDLPRDSSTSNQETRISEDQDTNFGAKKSVLSSESPVRAEKEEKYEVQEERSQENHLDSSNQRILQQEPDSVPSTNKTAEKTETLLPQGLGLSSLEIYKHEEEDEDAYFCYVKKVLKVSGFLENKDNEEKWYSEEQPLNPSLLYELDIQEEETVNDKELLFDLVNEAIVETQNHSQIYFPKTFPYGKRYLDEVWGRVEWSLSGLGAENRDRSLDDIVGRDLLTKSDGWMNLQGESEWLTLELEDLIFDDVLDELLCVY.

The disordered stretch occupies residues 295–379; sequence TDLPRDSSTS…NKTAEKTETL (85 aa). The span at 331–351 shows a compositional bias: basic and acidic residues; the sequence is VRAEKEEKYEVQEERSQENHL. A compositionally biased stretch (polar residues) spans 352–371; sequence DSSNQRILQQEPDSVPSTNK.

This is Protein TRM32 (TRM32) from Arabidopsis thaliana (Mouse-ear cress).